Reading from the N-terminus, the 744-residue chain is CCR4-NOT transcription complex subunit 10 (744 aa).

The span at methionine 1–glycine 16 shows a compositional bias: basic and acidic residues. Disordered stretches follow at residues methionine 1–glutamine 26, serine 183–lysine 204, glutamate 475–proline 522, and valine 602–glutamine 632. Position 2 is an N-acetylalanine (alanine 2). Polar residues predominate over residues serine 183–glycine 200. Positions glutamate 496–serine 506 are enriched in low complexity. Residues valine 602–aspartate 612 are compositionally biased toward polar residues.

It belongs to the CNOT10 family. As to quaternary structure, component of the CCR4-NOT complex; distinct complexes seem to exist that differ in the participation of probably mutually exclusive catalytic subunits. CNOT10 and CNOT11 form a subcomplex docked to the CNOT1 scaffold.

The protein localises to the cytoplasm. It is found in the nucleus. Its function is as follows. Component of the CCR4-NOT complex which is one of the major cellular mRNA deadenylases and is linked to various cellular processes including bulk mRNA degradation, miRNA-mediated repression, translational repression during translational initiation and general transcription regulation. Additional complex functions may be a consequence of its influence on mRNA expression. Is not required for association of CNOT7 to the CCR4-NOT complex. In Rattus norvegicus (Rat), this protein is CCR4-NOT transcription complex subunit 10 (Cnot10).